The following is a 202-amino-acid chain: Potassium-transporting ATPase KdpC subunit (202 aa).

A helical membrane pass occupies residues 7 to 27; it reads PAIFVLLALTLITGLLYPLAM. Residues 66-103 form a disordered region; that stretch reads FHGRPSATSTADPNDSTKTVPAPYNAANSSGSNLGPTS. Composition is skewed to polar residues over residues 71 to 84 and 91 to 101; these read SATSTADPNDSTKT and AANSSGSNLGP.

The protein belongs to the KdpC family. As to quaternary structure, the system is composed of three essential subunits: KdpA, KdpB and KdpC.

The protein resides in the cell inner membrane. Functionally, part of the high-affinity ATP-driven potassium transport (or Kdp) system, which catalyzes the hydrolysis of ATP coupled with the electrogenic transport of potassium into the cytoplasm. This subunit acts as a catalytic chaperone that increases the ATP-binding affinity of the ATP-hydrolyzing subunit KdpB by the formation of a transient KdpB/KdpC/ATP ternary complex. This Bradyrhizobium sp. (strain ORS 278) protein is Potassium-transporting ATPase KdpC subunit.